The chain runs to 229 residues: DNA repair protein RecO (229 aa).

It belongs to the RecO family.

Involved in DNA repair and RecF pathway recombination. This chain is DNA repair protein RecO, found in Legionella pneumophila subsp. pneumophila (strain Philadelphia 1 / ATCC 33152 / DSM 7513).